We begin with the raw amino-acid sequence, 256 residues long: Imidazole glycerol phosphate synthase subunit hisF1 (256 aa).

Residues aspartate 11 and aspartate 130 contribute to the active site.

The protein belongs to the HisA/HisF family. Heterodimer of HisH and HisF.

It is found in the cytoplasm. It catalyses the reaction 5-[(5-phospho-1-deoxy-D-ribulos-1-ylimino)methylamino]-1-(5-phospho-beta-D-ribosyl)imidazole-4-carboxamide + L-glutamine = D-erythro-1-(imidazol-4-yl)glycerol 3-phosphate + 5-amino-1-(5-phospho-beta-D-ribosyl)imidazole-4-carboxamide + L-glutamate + H(+). It participates in amino-acid biosynthesis; L-histidine biosynthesis; L-histidine from 5-phospho-alpha-D-ribose 1-diphosphate: step 5/9. IGPS catalyzes the conversion of PRFAR and glutamine to IGP, AICAR and glutamate. The HisF subunit catalyzes the cyclization activity that produces IGP and AICAR from PRFAR using the ammonia provided by the HisH subunit. This is Imidazole glycerol phosphate synthase subunit hisF1 (hisF1) from Parasynechococcus marenigrum (strain WH8102).